A 154-amino-acid chain; its full sequence is 6,7-dimethyl-8-ribityllumazine synthase (154 aa).

5-amino-6-(D-ribitylamino)uracil is bound by residues Phe22, 56-58 (AFE), and 80-82 (TVI). 85 to 86 (AT) is a binding site for (2S)-2-hydroxy-3-oxobutyl phosphate. Residue His88 is the Proton donor of the active site. Residue Phe113 participates in 5-amino-6-(D-ribitylamino)uracil binding. Arg127 is a binding site for (2S)-2-hydroxy-3-oxobutyl phosphate.

This sequence belongs to the DMRL synthase family. In terms of assembly, forms an icosahedral capsid composed of 60 subunits, arranged as a dodecamer of pentamers.

The enzyme catalyses (2S)-2-hydroxy-3-oxobutyl phosphate + 5-amino-6-(D-ribitylamino)uracil = 6,7-dimethyl-8-(1-D-ribityl)lumazine + phosphate + 2 H2O + H(+). The protein operates within cofactor biosynthesis; riboflavin biosynthesis; riboflavin from 2-hydroxy-3-oxobutyl phosphate and 5-amino-6-(D-ribitylamino)uracil: step 1/2. Functionally, catalyzes the formation of 6,7-dimethyl-8-ribityllumazine by condensation of 5-amino-6-(D-ribitylamino)uracil with 3,4-dihydroxy-2-butanone 4-phosphate. This is the penultimate step in the biosynthesis of riboflavin. The polypeptide is 6,7-dimethyl-8-ribityllumazine synthase (Bacillus pumilus (strain SAFR-032)).